The primary structure comprises 620 residues: Chaperone protein HscA homolog (620 aa).

The protein belongs to the heat shock protein 70 family.

Chaperone involved in the maturation of iron-sulfur cluster-containing proteins. Has a low intrinsic ATPase activity which is markedly stimulated by HscB. This chain is Chaperone protein HscA homolog, found in Neisseria meningitidis serogroup A / serotype 4A (strain DSM 15465 / Z2491).